A 5085-amino-acid chain; its full sequence is Linear gramicidin synthase subunit D (5085 aa).

Carrier domains are found at residues 962–1037, 2023–2097, 3544–3619, and 4601–4676; these read APRT…AAAG, SPST…EEKA, APRN…ELLT, and APQT…EEII. O-(pantetheine 4'-phosphoryl)serine is present on residues Ser997, Ser2058, Ser3579, and Ser4636.

Belongs to the ATP-dependent AMP-binding enzyme family. Large multienzyme complex composed of 4 subunits; LgrA, LgrB, LgrC and LgrD. Pantetheine 4'-phosphate is required as a cofactor.

Its function is as follows. Activates the 13th to the 16th (Trp, D-Leu, Trp and Gly) amino acids in linear gramicidin and catalyzes the formation of the peptide bond between them. This enzyme is also responsible for the epimerization of the 14th (D-Leu) amino acid. It also catalyzes the NAD(P)H-dependent reduction of the C-terminal glycine residue of the N-formylated 16-mer peptide, that binds to the peptidyl carrier domain of the terminal module of this protein, to form a peptidyl-aldehyde intermediate that is released from the enzyme complex. In Brevibacillus parabrevis, this protein is Linear gramicidin synthase subunit D (lgrD).